A 457-amino-acid chain; its full sequence is Glutamate--tRNA ligase 1 (457 aa).

Residues Pro9–Asn19 carry the 'HIGH' region motif. Residues Gly250–Arg254 carry the 'KMSKS' region motif. Residue Lys253 participates in ATP binding.

It belongs to the class-I aminoacyl-tRNA synthetase family. Glutamate--tRNA ligase type 1 subfamily. As to quaternary structure, monomer.

The protein resides in the cytoplasm. The enzyme catalyses tRNA(Glu) + L-glutamate + ATP = L-glutamyl-tRNA(Glu) + AMP + diphosphate. In terms of biological role, catalyzes the attachment of glutamate to tRNA(Glu) in a two-step reaction: glutamate is first activated by ATP to form Glu-AMP and then transferred to the acceptor end of tRNA(Glu). In Brucella canis (strain ATCC 23365 / NCTC 10854 / RM-666), this protein is Glutamate--tRNA ligase 1.